The primary structure comprises 326 residues: Acetyl-coenzyme A carboxylase carboxyl transferase subunit alpha (326 aa).

Residues 46 to 300 (EIEARAAELR…KEALLRHLDE (255 aa)) enclose the CoA carboxyltransferase C-terminal domain.

The protein belongs to the AccA family. In terms of assembly, acetyl-CoA carboxylase is a heterohexamer composed of biotin carboxyl carrier protein (AccB), biotin carboxylase (AccC) and two subunits each of ACCase subunit alpha (AccA) and ACCase subunit beta (AccD).

It localises to the cytoplasm. The enzyme catalyses N(6)-carboxybiotinyl-L-lysyl-[protein] + acetyl-CoA = N(6)-biotinyl-L-lysyl-[protein] + malonyl-CoA. It functions in the pathway lipid metabolism; malonyl-CoA biosynthesis; malonyl-CoA from acetyl-CoA: step 1/1. Its function is as follows. Component of the acetyl coenzyme A carboxylase (ACC) complex. First, biotin carboxylase catalyzes the carboxylation of biotin on its carrier protein (BCCP) and then the CO(2) group is transferred by the carboxyltransferase to acetyl-CoA to form malonyl-CoA. This chain is Acetyl-coenzyme A carboxylase carboxyl transferase subunit alpha, found in Gloeobacter violaceus (strain ATCC 29082 / PCC 7421).